The primary structure comprises 137 residues: uncharacterized protein (137 aa).

Belongs to the DCC thiol-disulfide oxidoreductase family.

This is an uncharacterized protein from Bacillus subtilis (strain 168).